The chain runs to 390 residues: Protein-glutamate methylesterase/protein-glutamine glutaminase (390 aa).

In terms of domain architecture, Response regulatory spans 4–121 (RALVVDDSGF…SGDMEQVKRQ (118 aa)). 4-aspartylphosphate is present on D55. Residues 130–198 (GGGRGAPAGR…AAPAPERGQR (69 aa)) are disordered. Composition is skewed to low complexity over residues 136 to 148 (PAGR…APVD) and 179 to 193 (EAPV…APAP). The CheB-type methylesterase domain maps to 201-390 (PGALRLVVIG…QVGEELAKLR (190 aa)). Active-site residues include S212, H239, and D335.

The protein belongs to the CheB family. Phosphorylated by CheA. Phosphorylation of the N-terminal regulatory domain activates the methylesterase activity.

It localises to the cytoplasm. The enzyme catalyses [protein]-L-glutamate 5-O-methyl ester + H2O = L-glutamyl-[protein] + methanol + H(+). It catalyses the reaction L-glutaminyl-[protein] + H2O = L-glutamyl-[protein] + NH4(+). Its function is as follows. Involved in chemotaxis. Part of a chemotaxis signal transduction system that modulates chemotaxis in response to various stimuli. Catalyzes the demethylation of specific methylglutamate residues introduced into the chemoreceptors (methyl-accepting chemotaxis proteins or MCP) by CheR. Also mediates the irreversible deamidation of specific glutamine residues to glutamic acid. In Alkalilimnicola ehrlichii (strain ATCC BAA-1101 / DSM 17681 / MLHE-1), this protein is Protein-glutamate methylesterase/protein-glutamine glutaminase.